We begin with the raw amino-acid sequence, 105 residues long: ATP synthase subunit c (105 aa).

Helical transmembrane passes span 32–52 (SILG…IGMG) and 78–98 (VAMA…IIAI).

This sequence belongs to the ATPase C chain family. As to quaternary structure, F-type ATPases have 2 components, F(1) - the catalytic core - and F(0) - the membrane proton channel. F(1) has five subunits: alpha(3), beta(3), gamma(1), delta(1), epsilon(1). F(0) has three main subunits: a(1), b(2) and c(10-14). The alpha and beta chains form an alternating ring which encloses part of the gamma chain. F(1) is attached to F(0) by a central stalk formed by the gamma and epsilon chains, while a peripheral stalk is formed by the delta and b chains.

It is found in the cell inner membrane. Its function is as follows. F(1)F(0) ATP synthase produces ATP from ADP in the presence of a proton or sodium gradient. F-type ATPases consist of two structural domains, F(1) containing the extramembraneous catalytic core and F(0) containing the membrane proton channel, linked together by a central stalk and a peripheral stalk. During catalysis, ATP synthesis in the catalytic domain of F(1) is coupled via a rotary mechanism of the central stalk subunits to proton translocation. Key component of the F(0) channel; it plays a direct role in translocation across the membrane. A homomeric c-ring of between 10-14 subunits forms the central stalk rotor element with the F(1) delta and epsilon subunits. The polypeptide is ATP synthase subunit c (Helicobacter pylori (strain ATCC 700392 / 26695) (Campylobacter pylori)).